We begin with the raw amino-acid sequence, 121 residues long: Large ribosomal subunit protein bL19 (121 aa).

This sequence belongs to the bacterial ribosomal protein bL19 family.

Its function is as follows. This protein is located at the 30S-50S ribosomal subunit interface and may play a role in the structure and function of the aminoacyl-tRNA binding site. The chain is Large ribosomal subunit protein bL19 from Mesomycoplasma hyopneumoniae (strain 7448) (Mycoplasma hyopneumoniae).